The sequence spans 587 residues: MDDRSSKKRKLKDVNGAKASGAATDVTVKPKKLKKAQSQEEVEPKVEKGSKKEEEENDWSDEEENEAADDAGHSSDSDVDEGDDTIAAPAKEADGDIPGDLTLPTTAESEAQAFSELNLSENTMKAIEEMGFTKMTEIQRRGIPPLLAGKDVLGAAKTGSGKTLAFLIPAVEMLRSLKFKPRNGTGVIVVSPTRELALQIFGVARDLMKHHSQTYGIVIGGANRRAEAEKLSKGVNLLIATPGRLLDHLQNTPFVFKNLRSLVIDEADRILEIGFEDEMRQIIKILPKERQSMLFSATQTTKVEDLARVSLRPGPLYLNVDEEKEYSTVEGLEQGYVVCEADKRFILLFSFLQKMKKKKIIVFFSSCNSVKYYAELLNYIDCQVLDLHGKQKQQKRTNTFFEFCNADRGTLICTDVAARGLDIPAVDWIVQFDPPDDPRDYIHRVGRTARGTNKKGRSLMFLLPSEVGFLTYLKQARVPVVEFDFPTKSIKNVQSQLEKLIGKNYYLNSSAKDGFRSYLHAYASHSLRSVFDINKLDLAKVAKSFGFATPPRVDIQLGASMSKDKKAGGRRAYGSQPRQGGTYGKRR.

A compositionally biased stretch (basic residues) spans 1–11 (MDDRSSKKRKL). The tract at residues 1-103 (MDDRSSKKRK…DGDIPGDLTL (103 aa)) is disordered. Basic and acidic residues predominate over residues 42 to 54 (VEPKVEKGSKKEE). Positions 55–69 (EENDWSDEEENEAAD) are enriched in acidic residues. The Q motif signature appears at 112–140 (QAFSELNLSENTMKAIEEMGFTKMTEIQR). The Helicase ATP-binding domain maps to 143–317 (IPPLLAGKDV…RVSLRPGPLY (175 aa)). An ATP-binding site is contributed by 156 to 163 (AKTGSGKT). A DEAD box motif is present at residues 265 to 268 (DEAD). In terms of domain architecture, Helicase C-terminal spans 331-501 (GLEQGYVVCE…NVQSQLEKLI (171 aa)). The disordered stretch occupies residues 558 to 587 (GASMSKDKKAGGRRAYGSQPRQGGTYGKRR).

The protein belongs to the DEAD box helicase family. DDX18/HAS1 subfamily. Associates in the nucleolus with the 60S and pre-60S ribosomal subunits.

The protein localises to the nucleus. It is found in the nucleolus. It catalyses the reaction ATP + H2O = ADP + phosphate + H(+). Its function is as follows. ATP-dependent RNA helicase involved in 40S ribosomal subunit biogenesis. Required for the processing and cleavage of 35S pre-rRNA at sites A0, A1, and A2, leading to mature 18S rRNA. The chain is ATP-dependent RNA helicase HAS1 (HAS1) from Pyricularia oryzae (strain 70-15 / ATCC MYA-4617 / FGSC 8958) (Rice blast fungus).